A 782-amino-acid polypeptide reads, in one-letter code: Small RNA degrading nuclease 3 (782 aa).

An Exonuclease domain is found at 145–296 (MLSIDCEMVT…HDAAAAMKLV (152 aa)). In terms of domain architecture, RRM 1 spans 331 to 410 (AQLFLHKIPH…KKAVLKLSSG (80 aa)). A disordered region spans residues 426–464 (PCEISTSERARAEENNVSSKRQKTEDETEETKEATVNQR). The 81-residue stretch at 469–549 (TKLFLHKIPH…KMVVFKLSSG (81 aa)) folds into the RRM 2 domain. The tract at residues 563 to 605 (DSPGEISTTKRARTEESNMSSKRQKTEDESEETKEANAKQREA) is disordered. A coiled-coil region spans residues 577–605 (EESNMSSKRQKTEDESEETKEANAKQREA). Residues 595–605 (TKEANAKQREA) show a composition bias toward basic and acidic residues. In terms of domain architecture, RRM 3 spans 608 to 688 (TKLLLHKIPL…KMVAFKLSSG (81 aa)). Residues 709–779 (ANANHCEDDH…KMKLEKKQSK (71 aa)) are a coiled coil.

This sequence belongs to the REXO1/REXO3 family. Associated with the Mediator complex.

Its subcellular location is the nucleus. Functionally, 3'-5' exonuclease degrading single-stranded small RNAs. This is Small RNA degrading nuclease 3 (SDN3) from Arabidopsis thaliana (Mouse-ear cress).